The chain runs to 123 residues: Aspartate 1-decarboxylase (123 aa).

Catalysis depends on S25, which acts as the Schiff-base intermediate with substrate; via pyruvic acid. Pyruvic acid (Ser) is present on S25. T57 serves as a coordination point for substrate. Y58 functions as the Proton donor in the catalytic mechanism. 73–75 contacts substrate; sequence GAA.

This sequence belongs to the PanD family. Heterooctamer of four alpha and four beta subunits. Pyruvate is required as a cofactor. Is synthesized initially as an inactive proenzyme, which is activated by self-cleavage at a specific serine bond to produce a beta-subunit with a hydroxyl group at its C-terminus and an alpha-subunit with a pyruvoyl group at its N-terminus.

It is found in the cytoplasm. The enzyme catalyses L-aspartate + H(+) = beta-alanine + CO2. Its pathway is cofactor biosynthesis; (R)-pantothenate biosynthesis; beta-alanine from L-aspartate: step 1/1. Catalyzes the pyruvoyl-dependent decarboxylation of aspartate to produce beta-alanine. The sequence is that of Aspartate 1-decarboxylase from Clostridium novyi (strain NT).